Consider the following 476-residue polypeptide: CBL-interacting protein kinase 30 (476 aa).

The 256-residue stretch at 17-272 (YKLGRLLGRG…ISKIMDRPWF (256 aa)) folds into the Protein kinase domain. Residues 23 to 31 (LGRGTFAKV) and Lys46 each bind ATP. Asp140 acts as the Proton acceptor in catalysis. Residues 158–187 (DFGLSALDGGLRGDGLLHTTCGTPAYVAPE) are activation loop. The segment at 296–315 (KEASQQHDDEEDDGFAREKK) is disordered. Residues 299–353 (SQQHDDEEDDGFAREKKKRSNVIMSSPVIDVRPSSMNAFDIISRSRGLDLSKMFD) form the NAF domain. A PPI region spans residues 358 to 387 (RSEARFSTRETTTAIVSKLEEIAEAGRFSF).

The protein belongs to the protein kinase superfamily. CAMK Ser/Thr protein kinase family. SNF1 subfamily. Mn(2+) serves as cofactor.

The catalysed reaction is L-seryl-[protein] + ATP = O-phospho-L-seryl-[protein] + ADP + H(+). It catalyses the reaction L-threonyl-[protein] + ATP = O-phospho-L-threonyl-[protein] + ADP + H(+). Functionally, CIPK serine-threonine protein kinases interact with CBL proteins. Binding of a CBL protein to the regulatory NAF domain of CIPK protein lead to the activation of the kinase in a calcium-dependent manner. This Oryza sativa subsp. japonica (Rice) protein is CBL-interacting protein kinase 30 (CIPK30).